The sequence spans 132 residues: Fatty acid-binding protein 12 (132 aa).

A fatty acid is bound by residues Arg-107 and 127–129 (RTY).

This sequence belongs to the calycin superfamily. Fatty-acid binding protein (FABP) family. In terms of tissue distribution, highly expressed in adult retina and testis.

Its function is as follows. May play a role in lipid transport. This is Fatty acid-binding protein 12 (Fabp12) from Mus musculus (Mouse).